The following is a 142-amino-acid chain: Neuritin (142 aa).

Positions Met-1–Ala-27 are cleaved as a signal peptide. Gly-116 carries GPI-anchor amidated glycine lipidation. Positions Ala-117–Phe-142 are cleaved as a propeptide — removed in mature form.

This sequence belongs to the neuritin family. Component of the outer core of AMPAR complex. AMPAR complex consists of an inner core made of 4 pore-forming GluA/GRIA proteins (GRIA1, GRIA2, GRIA3 and GRIA4) and 4 major auxiliary subunits arranged in a twofold symmetry. One of the two pairs of distinct binding sites is occupied either by CNIH2, CNIH3 or CACNG2, CACNG3. The other harbors CACNG2, CACNG3, CACNG4, CACNG8 or GSG1L. This inner core of AMPAR complex is complemented by outer core constituents binding directly to the GluA/GRIA proteins at sites distinct from the interaction sites of the inner core constituents. Outer core constituents include at least PRRT1, PRRT2, CKAMP44/SHISA9, FRRS1L and NRN1. The proteins of the inner and outer core serve as a platform for other, more peripherally associated AMPAR constituents. Alone or in combination, these auxiliary subunits control the gating and pharmacology of the AMPAR complex and profoundly impact their biogenesis and protein processing. In terms of tissue distribution, expressed in the brain (at protein level).

It is found in the cell membrane. It localises to the synapse. Functionally, promotes neurite outgrowth and especially branching of neuritic processes in primary hippocampal and cortical cells. The sequence is that of Neuritin (Nrn1) from Mus musculus (Mouse).